The primary structure comprises 508 residues: Histidine ammonia-lyase (508 aa).

The 5-imidazolinone (Ala-Gly) cross-link spans 139–141 (ASG). 2,3-didehydroalanine (Ser) is present on S140.

This sequence belongs to the PAL/histidase family. Post-translationally, contains an active site 4-methylidene-imidazol-5-one (MIO), which is formed autocatalytically by cyclization and dehydration of residues Ala-Ser-Gly.

It is found in the cytoplasm. The enzyme catalyses L-histidine = trans-urocanate + NH4(+). It participates in amino-acid degradation; L-histidine degradation into L-glutamate; N-formimidoyl-L-glutamate from L-histidine: step 1/3. The sequence is that of Histidine ammonia-lyase from Acidiphilium cryptum (strain JF-5).